We begin with the raw amino-acid sequence, 431 residues long: UDP-N-acetylglucosamine 1-carboxyvinyltransferase (431 aa).

22–23 (KN) provides a ligand contact to phosphoenolpyruvate. Residue Arg-102 coordinates UDP-N-acetyl-alpha-D-glucosamine. Cys-126 (proton donor) is an active-site residue. Cys-126 is modified (2-(S-cysteinyl)pyruvic acid O-phosphothioketal). UDP-N-acetyl-alpha-D-glucosamine-binding positions include 131-135 (RPVDL), Asp-316, and Ile-338.

Belongs to the EPSP synthase family. MurA subfamily.

It is found in the cytoplasm. The enzyme catalyses phosphoenolpyruvate + UDP-N-acetyl-alpha-D-glucosamine = UDP-N-acetyl-3-O-(1-carboxyvinyl)-alpha-D-glucosamine + phosphate. The protein operates within cell wall biogenesis; peptidoglycan biosynthesis. In terms of biological role, cell wall formation. Adds enolpyruvyl to UDP-N-acetylglucosamine. The sequence is that of UDP-N-acetylglucosamine 1-carboxyvinyltransferase from Beijerinckia indica subsp. indica (strain ATCC 9039 / DSM 1715 / NCIMB 8712).